We begin with the raw amino-acid sequence, 316 residues long: Methionyl-tRNA formyltransferase (316 aa).

112 to 115 is a (6S)-5,6,7,8-tetrahydrofolate binding site; that stretch reads SLLP.

This sequence belongs to the Fmt family.

The enzyme catalyses L-methionyl-tRNA(fMet) + (6R)-10-formyltetrahydrofolate = N-formyl-L-methionyl-tRNA(fMet) + (6S)-5,6,7,8-tetrahydrofolate + H(+). Attaches a formyl group to the free amino group of methionyl-tRNA(fMet). The formyl group appears to play a dual role in the initiator identity of N-formylmethionyl-tRNA by promoting its recognition by IF2 and preventing the misappropriation of this tRNA by the elongation apparatus. The sequence is that of Methionyl-tRNA formyltransferase from Trichlorobacter lovleyi (strain ATCC BAA-1151 / DSM 17278 / SZ) (Geobacter lovleyi).